The sequence spans 167 residues: UPF0225 protein VV1_2912 (167 aa).

The protein belongs to the UPF0225 family.

The polypeptide is UPF0225 protein VV1_2912 (Vibrio vulnificus (strain CMCP6)).